A 444-amino-acid polypeptide reads, in one-letter code: Dihydroorotate dehydrogenase (quinone), mitochondrial (444 aa).

A helical membrane pass occupies residues 34 to 56 (GGASRYIIGTASVLVGAMAGFYI). Residues 124-128 (AGLDK) and Thr148 each bind FMN. Lys128 contributes to the substrate binding site. Residue 173-177 (NRYGF) coordinates substrate. Residues Asn220 and Asn250 each coordinate FMN. 250–255 (NVSSPN) is a binding site for substrate. The Nucleophile role is filled by Ser253. FMN contacts are provided by Lys301 and Ser329. 330–331 (NT) is a substrate binding site. Residues Gly355, Gly385, and 406–407 (YT) each bind FMN.

This sequence belongs to the dihydroorotate dehydrogenase family. Type 2 subfamily. It depends on FMN as a cofactor.

The protein localises to the mitochondrion inner membrane. The catalysed reaction is (S)-dihydroorotate + a quinone = orotate + a quinol. It participates in pyrimidine metabolism; UMP biosynthesis via de novo pathway; orotate from (S)-dihydroorotate (quinone route): step 1/1. Its function is as follows. Catalyzes the conversion of dihydroorotate to orotate with quinone as electron acceptor. In Eremothecium gossypii (strain ATCC 10895 / CBS 109.51 / FGSC 9923 / NRRL Y-1056) (Yeast), this protein is Dihydroorotate dehydrogenase (quinone), mitochondrial (URA9).